The following is a 242-amino-acid chain: 3-oxoacyl-[acyl-carrier-protein] reductase FabG (242 aa).

NADP(+) is bound by residues glycine 10–arginine 13, threonine 35, asparagine 57–valine 58, and asparagine 84. Residue serine 136 participates in substrate binding. Tyrosine 149 serves as the catalytic Proton acceptor. Residues tyrosine 149–lysine 153 and isoleucine 182 each bind NADP(+).

The protein belongs to the short-chain dehydrogenases/reductases (SDR) family. As to quaternary structure, homotetramer.

It carries out the reaction a (3R)-hydroxyacyl-[ACP] + NADP(+) = a 3-oxoacyl-[ACP] + NADPH + H(+). It functions in the pathway lipid metabolism; fatty acid biosynthesis. Its function is as follows. Catalyzes the NADPH-dependent reduction of beta-ketoacyl-ACP substrates to beta-hydroxyacyl-ACP products, the first reductive step in the elongation cycle of fatty acid biosynthesis. The sequence is that of 3-oxoacyl-[acyl-carrier-protein] reductase FabG (fabG) from Haemophilus influenzae (strain ATCC 51907 / DSM 11121 / KW20 / Rd).